A 95-amino-acid polypeptide reads, in one-letter code: Heteroscorpine-1 (95 aa).

The N-terminal stretch at 1-19 (MNSKLTALIFLGLVAIASC) is a signal peptide. The 41-residue stretch at 55–95 (EFQCVANIDTMGNCETHCQKTSGEKGFCHGTKCKCGKPLSY) folds into the BetaSPN-type CS-alpha/beta domain. 3 disulfides stabilise this stretch: cysteine 58–cysteine 82, cysteine 68–cysteine 87, and cysteine 72–cysteine 89.

It belongs to the long chain scorpion toxin family. Class 3 subfamily. In terms of processing, contains 3 disulfide bonds. As to expression, expressed by the venom gland.

It localises to the secreted. Has antibacterial activity against B.subtilis, K.pneumoniae and P.aeruginosa. The chain is Heteroscorpine-1 from Heterometrus laoticus (Thai giant scorpion).